Consider the following 634-residue polypeptide: Calcium up-regulated protein D (634 aa).

Residues 1-23 (MINIEDISKSSNQSEEKQLKSTS) form a disordered region. 2 Ricin B-type lectin domains span residues 27–146 (KPKY…WTTF) and 117–250 (PGNG…WGIN).

The protein belongs to the cup family.

The protein resides in the cytoplasm. The protein localises to the membrane. In terms of biological role, may play an important role in stabilizing and/or regulating the cell membrane during Ca(2+) stress or certain stages of development. In Dictyostelium discoideum (Social amoeba), this protein is Calcium up-regulated protein D (cupD).